The following is a 195-amino-acid chain: MSLIPWLRWNDTPPRLSARTPAEMVLETLMMELAGQMREVERQQRERRSAVRKICTGVDYSWLANTPRPTYDISPGERLQLEDVCAKIHPSYCGPAILRFRQLLAEREPEVQEVARLFRSVLQEALEKMKQEEEAHKLTRQWSLRPRGSLSSFKTRARIAPFASDIRTISEDVERDAPPPPRTWSMPEFRAPQAD.

A coiled-coil region spans residues 22–54 (AEMVLETLMMELAGQMREVERQQRERRSAVRKI). Over residues 168–177 (TISEDVERDA) the composition is skewed to basic and acidic residues. The disordered stretch occupies residues 168 to 195 (TISEDVERDAPPPPRTWSMPEFRAPQAD).

As to quaternary structure, monomer. Interacts with GUCY2E; promotes the exit of GUCY2E from the endoplasmic reticulum and its trafficking to the photoreceptor outer segments. The interaction with GUCY2E negatively regulates its activity. Interacts with GUCY2F; promotes the exit of GUCY2F from the endoplasmic reticulum and its trafficking to the photoreceptor outer segments. The interaction with GUCY2F negatively regulates its activity. Interacts with GUK1; up-regulates GUK1 activity. In terms of tissue distribution, expressed in the retina and in particular in the inner nuclear layer, in rod and cone outer segments, in the outer nuclear layer, in the outer plexiform layer and in the ganglion cell layer.

It is found in the cell projection. Its subcellular location is the cilium. The protein resides in the photoreceptor outer segment. It localises to the photoreceptor inner segment. The protein localises to the endosome. It is found in the nucleus. Its subcellular location is the cytoplasm. The protein resides in the perinuclear region. Functionally, plays a critical role in the regulation of enzymes involved in nucleotide cycle in photoreceptors. Inhibits the basal catalytic activity and the GCAP-stimulated activity of GUCY2E and GUCY2F, two retinal guanylyl cyclases involved in the production of cGMP in photoreceptors. Involved in the transport of GUCY2E and GUCY2F to their target sites in the photoreceptor outer segment. Up-regulates the activity of GUK1, a kinase that also plays an essential role for recycling GMP and indirectly, cGMP. Plays an important role for the survival of rods and cones in the retina. The protein is Protein RD3 (Rd3) of Mus musculus (Mouse).